A 208-amino-acid chain; its full sequence is Large ribosomal subunit protein bL25 (208 aa).

Positions valine 184–aspartate 208 are disordered. The segment covering serine 187 to aspartate 208 has biased composition (low complexity).

The protein belongs to the bacterial ribosomal protein bL25 family. CTC subfamily. In terms of assembly, part of the 50S ribosomal subunit; part of the 5S rRNA/L5/L18/L25 subcomplex. Contacts the 5S rRNA. Binds to the 5S rRNA independently of L5 and L18.

Functionally, this is one of the proteins that binds to the 5S RNA in the ribosome where it forms part of the central protuberance. In Ehrlichia ruminantium (strain Gardel), this protein is Large ribosomal subunit protein bL25.